A 447-amino-acid polypeptide reads, in one-letter code: Folate synthesis bifunctional protein (447 aa).

The HPPK stretch occupies residues 1-165 (MTTAQFICLS…SFGEIAHLLP (165 aa)). One can recognise a Pterin-binding domain in the interval 179-438 (TLLMGVVNVT…DVEANQRVLS (260 aa)). A DHPS region spans residues 181–447 (LMGVVNVTDN…SAAAWSGVHV (267 aa)). Asn-186 contributes to the Mg(2+) binding site. (7,8-dihydropterin-6-yl)methyl diphosphate is bound by residues Thr-226, Asp-266, Asn-286, Asp-356, Lys-392, and 426 to 428 (RVH).

In the C-terminal section; belongs to the DHPS family. It in the N-terminal section; belongs to the HPPK family. The cofactor is Mg(2+).

The enzyme catalyses 6-hydroxymethyl-7,8-dihydropterin + ATP = (7,8-dihydropterin-6-yl)methyl diphosphate + AMP + H(+). It carries out the reaction (7,8-dihydropterin-6-yl)methyl diphosphate + 4-aminobenzoate = 7,8-dihydropteroate + diphosphate. It participates in cofactor biosynthesis; tetrahydrofolate biosynthesis; 2-amino-4-hydroxy-6-hydroxymethyl-7,8-dihydropteridine diphosphate from 7,8-dihydroneopterin triphosphate: step 4/4. Its pathway is cofactor biosynthesis; tetrahydrofolate biosynthesis; 7,8-dihydrofolate from 2-amino-4-hydroxy-6-hydroxymethyl-7,8-dihydropteridine diphosphate and 4-aminobenzoate: step 1/2. In Chlamydia caviae (strain ATCC VR-813 / DSM 19441 / 03DC25 / GPIC) (Chlamydophila caviae), this protein is Folate synthesis bifunctional protein (folKP).